The sequence spans 282 residues: Alpha/beta-gliadin A-III (282 aa).

The signal sequence occupies residues 1–20; the sequence is MKTFLILALLAIVATTATSA. Low complexity predominate over residues 27–59; that stretch reads QLQPQNPSQQQPQEQVPLMQQQQQFPGQQEQFP. 2 disordered regions span residues 27–122 and 220–240; these read QLQP…AQQQ and SGQV…SVQP. Residues 60-111 are compositionally biased toward pro residues; the sequence is PQQPYPHQQPFPSQQPYPQPQPFPPQLPYPQTQPFPPQQPYPQPQPQYPQPQ. Over residues 112-122 the composition is skewed to low complexity; sequence QPISQQQAQQQ. Over residues 224 to 240 the composition is skewed to polar residues; the sequence is SFQSSQQNPQAQGSVQP.

This sequence belongs to the gliadin/glutenin family. Substrate of transglutaminase.

Functionally, gliadin is the major seed storage protein in wheat. This chain is Alpha/beta-gliadin A-III, found in Triticum aestivum (Wheat).